The primary structure comprises 285 residues: Protoheme IX farnesyltransferase (285 aa).

7 consecutive transmembrane segments (helical) span residues 16-36 (AKPKVVSLLDVVAIASYILAF), 40-60 (WYNLIPVLIGGSIAAGGSMII), 106-126 (LLANPLTAFFILLGSLVYVFV), 136-156 (WLNIVIGGFAGSAAAWAGYAA), 165-185 (SLLLGLLVFAWTPGHFWALAL), 217-237 (ILMIPFALGLMLYLNLIYVII), and 265-285 (YKFSAPYLAIVMIAAVISFIL).

It belongs to the UbiA prenyltransferase family. Protoheme IX farnesyltransferase subfamily.

It localises to the cell membrane. It catalyses the reaction heme b + (2E,6E)-farnesyl diphosphate + H2O = Fe(II)-heme o + diphosphate. It participates in porphyrin-containing compound metabolism; heme O biosynthesis; heme O from protoheme: step 1/1. Converts heme B (protoheme IX) to heme O by substitution of the vinyl group on carbon 2 of heme B porphyrin ring with a hydroxyethyl farnesyl side group. In Sulfolobus acidocaldarius (strain ATCC 33909 / DSM 639 / JCM 8929 / NBRC 15157 / NCIMB 11770), this protein is Protoheme IX farnesyltransferase.